A 196-amino-acid polypeptide reads, in one-letter code: Molybdenum cofactor guanylyltransferase (196 aa).

GTP contacts are provided by residues 10-12 (LAG), lysine 23, asparagine 51, aspartate 69, and aspartate 99. Aspartate 99 contributes to the Mg(2+) binding site.

The protein belongs to the MobA family. As to quaternary structure, monomer. Mg(2+) is required as a cofactor.

It is found in the cytoplasm. It catalyses the reaction Mo-molybdopterin + GTP + H(+) = Mo-molybdopterin guanine dinucleotide + diphosphate. In terms of biological role, transfers a GMP moiety from GTP to Mo-molybdopterin (Mo-MPT) cofactor (Moco or molybdenum cofactor) to form Mo-molybdopterin guanine dinucleotide (Mo-MGD) cofactor. The sequence is that of Molybdenum cofactor guanylyltransferase from Shewanella sediminis (strain HAW-EB3).